The sequence spans 338 residues: Holliday junction branch migration complex subunit RuvB (338 aa).

The segment at methionine 1 to tyrosine 181 is large ATPase domain (RuvB-L). Residues leucine 20, arginine 21, glycine 62, lysine 65, threonine 66, threonine 67, glutamate 128–phenylalanine 130, arginine 171, tyrosine 181, and arginine 218 contribute to the ATP site. Threonine 66 is a binding site for Mg(2+). The tract at residues threonine 182 to glutamate 252 is small ATPAse domain (RuvB-S). The tract at residues glutamate 255–phenylalanine 338 is head domain (RuvB-H). The DNA site is built by arginine 310 and arginine 315.

Belongs to the RuvB family. In terms of assembly, homohexamer. Forms an RuvA(8)-RuvB(12)-Holliday junction (HJ) complex. HJ DNA is sandwiched between 2 RuvA tetramers; dsDNA enters through RuvA and exits via RuvB. An RuvB hexamer assembles on each DNA strand where it exits the tetramer. Each RuvB hexamer is contacted by two RuvA subunits (via domain III) on 2 adjacent RuvB subunits; this complex drives branch migration. In the full resolvosome a probable DNA-RuvA(4)-RuvB(12)-RuvC(2) complex forms which resolves the HJ.

It is found in the cytoplasm. The enzyme catalyses ATP + H2O = ADP + phosphate + H(+). The RuvA-RuvB-RuvC complex processes Holliday junction (HJ) DNA during genetic recombination and DNA repair, while the RuvA-RuvB complex plays an important role in the rescue of blocked DNA replication forks via replication fork reversal (RFR). RuvA specifically binds to HJ cruciform DNA, conferring on it an open structure. The RuvB hexamer acts as an ATP-dependent pump, pulling dsDNA into and through the RuvAB complex. RuvB forms 2 homohexamers on either side of HJ DNA bound by 1 or 2 RuvA tetramers; 4 subunits per hexamer contact DNA at a time. Coordinated motions by a converter formed by DNA-disengaged RuvB subunits stimulates ATP hydrolysis and nucleotide exchange. Immobilization of the converter enables RuvB to convert the ATP-contained energy into a lever motion, pulling 2 nucleotides of DNA out of the RuvA tetramer per ATP hydrolyzed, thus driving DNA branch migration. The RuvB motors rotate together with the DNA substrate, which together with the progressing nucleotide cycle form the mechanistic basis for DNA recombination by continuous HJ branch migration. Branch migration allows RuvC to scan DNA until it finds its consensus sequence, where it cleaves and resolves cruciform DNA. The chain is Holliday junction branch migration complex subunit RuvB from Geotalea uraniireducens (strain Rf4) (Geobacter uraniireducens).